The chain runs to 461 residues: GTPase Der (461 aa).

EngA-type G domains follow at residues 2–164 and 197–369; these read QSII…NENF and IKVG…ANFT. GTP contacts are provided by residues 8–15, 55–59, 116–119, 203–210, 250–254, and 314–317; these read GKPNVGKS, DSGGL, NKID, GRVNVGKS, DTAGI, and NKWD. The KH-like domain occupies 370-454; it reads QKIPTAKLNA…PLIIVSRKKG (85 aa).

This sequence belongs to the TRAFAC class TrmE-Era-EngA-EngB-Septin-like GTPase superfamily. EngA (Der) GTPase family. Associates with the 50S ribosomal subunit.

In terms of biological role, GTPase that plays an essential role in the late steps of ribosome biogenesis. The protein is GTPase Der of Campylobacter lari (strain RM2100 / D67 / ATCC BAA-1060).